The sequence spans 92 residues: Large ribosomal subunit protein bL34m (92 aa).

A mitochondrion-targeting transit peptide spans M1 to G46. The residue at position 71 (S71) is a Phosphoserine.

Belongs to the bacterial ribosomal protein bL34 family. As to quaternary structure, component of the mitochondrial large ribosomal subunit (mt-LSU). Mature mammalian 55S mitochondrial ribosomes consist of a small (28S) and a large (39S) subunit. The 28S small subunit contains a 12S ribosomal RNA (12S mt-rRNA) and 30 different proteins. The 39S large subunit contains a 16S rRNA (16S mt-rRNA), a copy of mitochondrial valine transfer RNA (mt-tRNA(Val)), which plays an integral structural role, and 52 different proteins.

It is found in the mitochondrion. This Homo sapiens (Human) protein is Large ribosomal subunit protein bL34m (MRPL34).